A 425-amino-acid chain; its full sequence is Polyribonucleotide 5'-hydroxyl-kinase Clp1 (425 aa).

Residues Glu22, Lys62, and 124 to 129 contribute to the ATP site; that span reads DVGKST.

The protein belongs to the Clp1 family. Clp1 subfamily. In terms of assembly, component of the tRNA splicing endonuclease complex, composed of CLP1, TSEN2, TSEN15, TSEN34 and TSEN54. Component of pre-mRNA cleavage complex II (CF-II). Also associates with numerous components of the pre-mRNA cleavage complex I (CF-I/CFIm), including NUDT21, CPSF2, CPSF3, CPSF6 and CPSF7. Interacts with CSTF2 and SYMPK. The cofactor is Mg(2+). Mn(2+) is required as a cofactor. Requires Ni(2+) as cofactor.

It is found in the nucleus. It catalyses the reaction a 5'-end dephospho-2'-deoxyribonucleoside-DNA + ATP = a 5'-end 5'-phospho-2'-deoxyribonucleoside-DNA + ADP + H(+). The catalysed reaction is a 5'-end dephospho-ribonucleoside-RNA + ATP = a 5'-end 5'-phospho-ribonucleoside-RNA + ADP + H(+). Functionally, polynucleotide kinase that can phosphorylate the 5'-hydroxyl groups of double-stranded RNA (dsRNA), single-stranded RNA (ssRNA), double-stranded DNA (dsDNA) and double-stranded DNA:RNA hybrids. dsRNA is phosphorylated more efficiently than dsDNA, and the RNA component of a DNA:RNA hybrid is phosphorylated more efficiently than the DNA component. Plays a key role in both tRNA splicing and mRNA 3'-end formation. Component of the tRNA splicing endonuclease complex: phosphorylates the 5'-terminus of the tRNA 3'-exon during tRNA splicing; this phosphorylation event is a prerequisite for the subsequent ligation of the two exon halves and the production of a mature tRNA. Its role in tRNA splicing and maturation is required for cerebellar development. Component of the pre-mRNA cleavage complex II (CF-II), which seems to be required for mRNA 3'-end formation. Also phosphorylates the 5'-terminus of exogenously introduced short interfering RNAs (siRNAs), which is a necessary prerequisite for their incorporation into the RNA-induced silencing complex (RISC). However, endogenous siRNAs and microRNAs (miRNAs) that are produced by the cleavage of dsRNA precursors by DICER1 already contain a 5'-phosphate group, so this protein may be dispensible for normal RNA-mediated gene silencing. The chain is Polyribonucleotide 5'-hydroxyl-kinase Clp1 from Homo sapiens (Human).